We begin with the raw amino-acid sequence, 594 residues long: Gamma-terpinene synthase, chloroplastic (594 aa).

Residues 1-44 constitute a chloroplast transit peptide; that stretch reads MATLSMQVSILSKEVKNVNNIGMRASKPMVARRVSTTRLRPICS. Aspartate 347 and aspartate 351 together coordinate Mn(2+). Residues 347–351 carry the DDXXD motif motif; sequence DDVYD. Homodimerization stretches follow at residues 353–359 and 425–462; these read YGTLDEL and EAKW…FTLP. Residues aspartate 491 and glutamate 499 each coordinate Mn(2+).

Belongs to the terpene synthase family. As to quaternary structure, homodimer. It depends on Mn(2+) as a cofactor. The cofactor is Mg(2+). As to expression, expressed in peltate glandular trichomes.

The protein resides in the plastid. It localises to the chloroplast. It carries out the reaction (2E)-geranyl diphosphate = gamma-terpinene + diphosphate. The catalysed reaction is (2E)-geranyl diphosphate = alpha-terpinene + diphosphate. It functions in the pathway secondary metabolite biosynthesis; terpenoid biosynthesis. Involved in the biosynthesis of phenolic monoterpenes natural products thymol and carvacrol which have a broad range of biological activities acting as antimicrobial compounds, insecticides, antioxidants and pharmaceutical agents. Monoterpene synthase which catalyzes the conversion of geranyl diphosphate (GPP) to gamma-terpinene and the minor products alpha-thujene, alpha-terpinene, myrcene, sabinene, (+)-R-limonene, alpha-pinene and alpha-phellandrene. This is Gamma-terpinene synthase, chloroplastic from Origanum vulgare (Wild marjoram).